Reading from the N-terminus, the 410-residue chain is Cytosolic isocitrate dehydrogenase [NADP] (410 aa).

Residues 77–79 (TIT) and Arg-84 each bind NADP(+). Thr-79 contributes to the substrate binding site. Substrate is bound by residues 96–102 (SPNGTIR), Arg-111, and Arg-134. Residue Lys-260 coordinates NADP(+). Mn(2+)-binding residues include Asp-275 and Asp-279. Residues 310-315 (GTVTRH) and Asn-328 each bind NADP(+).

It belongs to the isocitrate and isopropylmalate dehydrogenases family. Mg(2+) is required as a cofactor. Mn(2+) serves as cofactor.

Its subcellular location is the cytoplasm. The protein localises to the cytosol. The enzyme catalyses D-threo-isocitrate + NADP(+) = 2-oxoglutarate + CO2 + NADPH. May supply 2-oxoglutarate for amino acid biosynthesis and ammonia assimilation via the glutamine synthetase/glutamate synthase (GS/GOGAT) pathway. May be involved in the production of NADPH to promote redox signaling or homeostasis in response to oxidative stress, or redox signaling linked to defense responses. This Arabidopsis thaliana (Mouse-ear cress) protein is Cytosolic isocitrate dehydrogenase [NADP].